Here is a 120-residue protein sequence, read N- to C-terminus: Ribosome-binding factor A (120 aa).

Belongs to the RbfA family. Monomer. Binds 30S ribosomal subunits, but not 50S ribosomal subunits or 70S ribosomes.

The protein localises to the cytoplasm. Functionally, one of several proteins that assist in the late maturation steps of the functional core of the 30S ribosomal subunit. Associates with free 30S ribosomal subunits (but not with 30S subunits that are part of 70S ribosomes or polysomes). Required for efficient processing of 16S rRNA. May interact with the 5'-terminal helix region of 16S rRNA. The protein is Ribosome-binding factor A of Chlamydia caviae (strain ATCC VR-813 / DSM 19441 / 03DC25 / GPIC) (Chlamydophila caviae).